The chain runs to 80 residues: UPF0346 protein LSEI_1394 (80 aa).

Belongs to the UPF0346 family.

This is UPF0346 protein LSEI_1394 from Lacticaseibacillus paracasei (strain ATCC 334 / BCRC 17002 / CCUG 31169 / CIP 107868 / KCTC 3260 / NRRL B-441) (Lactobacillus paracasei).